We begin with the raw amino-acid sequence, 356 residues long: Cyclin-dependent kinase 5 activator 1 (356 aa).

2 disordered regions span residues 1 to 53 (MGAN…AKES) and 66 to 99 (IQPV…FTRN). Low complexity-rich tracts occupy residues 40-49 (SNTSSRSSSN) and 71-92 (SRRS…SSDS).

The protein belongs to the cyclin-dependent kinase 5 activator family. As to quaternary structure, heterodimer composed of a catalytic subunit cdk-5 and a regulatory subunit cdka-1. Interaction with cdka-1 is required for cdk-5 activation. In terms of tissue distribution, expressed in all classes of neurons in the ventral cord.

The protein localises to the cytoplasm. Its subcellular location is the cell projection. It localises to the dendrite. The protein resides in the axon. Activator of the kinase cdk-5. In several motor neurons, promotes the polarized trafficking of synaptic vesicles and dense-core vesicles. In the ventral nerve cord, regulates the synaptic localization of the glutamate receptor, glr-1. In DA motor neurons, regulates axonal transport of synaptic vesicle precursors by inhibiting dynein-mediated retrograde transport. Regulates the polarized distribution of dense-core vesicles in DB motor neurons. May regulate these processes in association with cdk-5. May also play a role in GABAergic synaptic vesicle localization in the ventral nerve cord. The chain is Cyclin-dependent kinase 5 activator 1 from Caenorhabditis elegans.